The sequence spans 354 residues: Probable trehalose-phosphate phosphatase E (354 aa).

Belongs to the trehalose phosphatase family. Requires a divalent metal cation as cofactor.

The enzyme catalyses alpha,alpha-trehalose 6-phosphate + H2O = alpha,alpha-trehalose + phosphate. It functions in the pathway glycan biosynthesis; trehalose biosynthesis. In terms of biological role, removes the phosphate from trehalose 6-phosphate to produce free trehalose. Trehalose accumulation in plant may improve abiotic stress tolerance. The sequence is that of Probable trehalose-phosphate phosphatase E (TPPE) from Arabidopsis thaliana (Mouse-ear cress).